Consider the following 779-residue polypeptide: Endonuclease MutS2 (779 aa).

328–335 provides a ligand contact to ATP; the sequence is GPNTGGKT. Residues 704 to 779 form the Smr domain; it reads LDLRGKRYEE…GSGATIVTLG (76 aa).

The protein belongs to the DNA mismatch repair MutS family. MutS2 subfamily. In terms of assembly, homodimer. Binds to stalled ribosomes, contacting rRNA.

In terms of biological role, endonuclease that is involved in the suppression of homologous recombination and thus may have a key role in the control of bacterial genetic diversity. Its function is as follows. Acts as a ribosome collision sensor, splitting the ribosome into its 2 subunits. Detects stalled/collided 70S ribosomes which it binds and splits by an ATP-hydrolysis driven conformational change. Acts upstream of the ribosome quality control system (RQC), a ribosome-associated complex that mediates the extraction of incompletely synthesized nascent chains from stalled ribosomes and their subsequent degradation. Probably generates substrates for RQC. The polypeptide is Endonuclease MutS2 (Streptococcus agalactiae serotype Ia (strain ATCC 27591 / A909 / CDC SS700)).